The sequence spans 79 residues: Sulfur carrier protein TusA (79 aa).

The active-site Cysteine persulfide intermediate is Cys-17.

The protein belongs to the sulfur carrier protein TusA family.

It is found in the cytoplasm. Its function is as follows. Sulfur carrier protein which probably makes part of a sulfur-relay system. The polypeptide is Sulfur carrier protein TusA (Haemophilus ducreyi (strain 35000HP / ATCC 700724)).